The primary structure comprises 154 residues: Protein ripply (154 aa).

The WRPW motif motif lies at 38-41 (WRPW). 2 disordered regions span residues 54–86 (IRER…FQHP) and 121–154 (EDPA…PILN). The ripply homology domain stretch occupies residues 85–119 (HPVKLHWSKPVYDYMYQYGKQLLDAFPVQATICIV). The segment covering 121 to 140 (EDPAQSDDSDFESDYEDDSD) has biased composition (acidic residues).

The protein belongs to the ripply family. In terms of tissue distribution, in the late gastrula stage, expression appears in the dorsal presomitic mesoderm and in the first three pairs of nascent somites. Expressed strongly in forming somites and then expression is rapidly down-regulated except in the first somite pair where expression is maintained for a longer period. Also expressed in the presumptive notochord and in the tail bud at the 48 hour larval stage. Expression disappears by the 72 hour stage.

It localises to the nucleus. Functionally, may play a role in somitogenesis. The chain is Protein ripply from Branchiostoma belcheri (Amphioxus).